A 121-amino-acid chain; its full sequence is Putative iron-sulfur cluster insertion protein ErpA 1 (121 aa).

Positions 49, 113, and 115 each coordinate iron-sulfur cluster.

It belongs to the HesB/IscA family. In terms of assembly, homodimer. The cofactor is iron-sulfur cluster.

Functionally, required for insertion of 4Fe-4S clusters. The polypeptide is Putative iron-sulfur cluster insertion protein ErpA 1 (Polaromonas naphthalenivorans (strain CJ2)).